The following is a 1573-amino-acid chain: Mediator of RNA polymerase II transcription subunit 1 (1573 aa).

The LXXLL motif 1 signature appears at 588-592; the sequence is LTSLL. 3 disordered regions span residues 595 to 691, 774 to 883, and 928 to 1564; these read TSNS…EDDF, SKLP…FKDF, and LGGP…GDDD. Residues 606 to 617 are compositionally biased toward pro residues; sequence PTPPQHTPPPAS. Positions 629–633 match the LXXLL motif 2 motif; it reads LMNLL. Residues 651-668 are compositionally biased toward polar residues; sequence ERQNSSGSPRTELGSSAS. The segment covering 678–691 has biased composition (basic and acidic residues); the sequence is TGTEKMKNQTEDDF. 3 stretches are compositionally biased toward polar residues: residues 791-804, 835-864, and 934-944; these read RDSS…STLF, GSPN…QSGF, and QETQSRSQSPL. Basic and acidic residues predominate over residues 949–961; the sequence is LGKDRPQKQKVKE. The segment covering 963 to 973 has biased composition (gly residues); sequence GNGGGAGGGLS. 5 stretches are compositionally biased toward low complexity: residues 1025–1038, 1053–1085, 1092–1116, 1124–1143, and 1155–1164; these read PTST…GTSG, KITI…SSSS, SSLS…MKIG, SGQS…SMGK, and SSNVNNSSGS. The span at 1176-1193 shows a compositional bias: polar residues; it reads MNPSLSKPNISPSHSRPS. Residues 1226 to 1277 are compositionally biased toward low complexity; the sequence is LSGSGSNSTTKSSSGLVSSGSLTQKPNSSSSSSSSSSSSSSSSSSSSSSFSS. Polar residues predominate over residues 1278–1290; that stretch reads GVSQNLHSSSKGK. The segment covering 1350 to 1362 has biased composition (basic and acidic residues); the sequence is PTKREKGEKDKSK. 2 stretches are compositionally biased toward polar residues: residues 1420-1435 and 1443-1457; these read SQMQ…SGST and PSHN…QALD. Low complexity predominate over residues 1461-1471; the sequence is ESGSSSIAEKS. Positions 1496–1505 are enriched in basic residues; that stretch reads KHKKHKKEKK. Over residues 1506 to 1518 the composition is skewed to basic and acidic residues; the sequence is RLKDKDRDREKKK.

It belongs to the Mediator complex subunit 1 family. In terms of assembly, component of the Mediator complex.

It localises to the nucleus. Its function is as follows. Component of the Mediator complex, a coactivator involved in the regulated transcription of nearly all RNA polymerase II-dependent genes. Mediator functions as a bridge to convey information from gene-specific regulatory proteins to the basal RNA polymerase II transcription machinery. Mediator is recruited to promoters by direct interactions with regulatory proteins and serves as a scaffold for the assembly of a functional preinitiation complex with RNA polymerase II and the general transcription factors. This chain is Mediator of RNA polymerase II transcription subunit 1 (med1), found in Xenopus tropicalis (Western clawed frog).